Here is a 166-residue protein sequence, read N- to C-terminus: Cofilin-2 (166 aa).

N-acetylalanine is present on Ala-2. Position 3 is a phosphoserine (Ser-3). Residues 4–153 (GVTVNDEVIK…KDRSTLGEKL (150 aa)) form the ADF-H domain. Thr-6 is modified (phosphothreonine). The short motif at 30 to 34 (KKRKK) is the Nuclear localization signal element.

This sequence belongs to the actin-binding proteins ADF family. As to quaternary structure, interacts with CSRP3; possibly two molecules of CFL2 can interact with one molecule if CSRP3. Post-translationally, the phosphorylation of Ser-24 may prevent recognition of the nuclear localization signal. In terms of tissue distribution, predominantly expressed in skeletal muscle.

The protein localises to the nucleus matrix. It is found in the cytoplasm. The protein resides in the cytoskeleton. Its function is as follows. Controls reversibly actin polymerization and depolymerization in a pH-sensitive manner. It has the ability to bind G- and F-actin in a 1:1 ratio of cofilin to actin. It is the major component of intranuclear and cytoplasmic actin rods. Required for muscle maintenance. May play a role during the exchange of alpha-actin forms during the early postnatal remodeling of the sarcomere. The protein is Cofilin-2 (Cfl2) of Mus musculus (Mouse).